Here is a 189-residue protein sequence, read N- to C-terminus: MIIYYSANQSKSGLKILLKNEPCLILENQFVKPGKGQPFNRIKIKKLISGKIFTKIFKSNEKLIYADVLDVKVKSLYKDKKYWNFIKKENFEQFKISKKNLGEKYKWIIEQLECIVTFWDENPINITLPRFVDIKVCNANFDIKGDTIKSGNKYIILTTGAIIKAPIFIRSEEIVRVDTNLGEYVSRIK.

Residue K35 is modified to N6-(3,6-diaminohexanoyl)-5-hydroxylysine.

The protein belongs to the elongation factor P family. May be beta-lysylated on the epsilon-amino group of Lys-35 by the combined action of EpmA and EpmB, and then hydroxylated on the C5 position of the same residue by EpmC (if this protein is present). Lysylation is critical for the stimulatory effect of EF-P on peptide-bond formation. The lysylation moiety may extend toward the peptidyltransferase center and stabilize the terminal 3-CCA end of the tRNA. Hydroxylation of the C5 position on Lys-35 may allow additional potential stabilizing hydrogen-bond interactions with the P-tRNA.

The protein localises to the cytoplasm. Its pathway is protein biosynthesis; polypeptide chain elongation. Functionally, involved in peptide bond synthesis. Alleviates ribosome stalling that occurs when 3 or more consecutive Pro residues or the sequence PPG is present in a protein, possibly by augmenting the peptidyl transferase activity of the ribosome. Modification of Lys-35 is required for alleviation. The sequence is that of Elongation factor P from Wigglesworthia glossinidia brevipalpis.